Reading from the N-terminus, the 131-residue chain is Small ribosomal subunit protein uS9 (131 aa).

Belongs to the universal ribosomal protein uS9 family.

The chain is Small ribosomal subunit protein uS9 from Haemophilus ducreyi (strain 35000HP / ATCC 700724).